A 339-amino-acid chain; its full sequence is UDP-N-acetylenolpyruvoylglucosamine reductase (339 aa).

The region spanning Gly-18–Arg-189 is the FAD-binding PCMH-type domain. Residue Arg-166 is part of the active site. Catalysis depends on Ser-239, which acts as the Proton donor. Glu-335 is an active-site residue.

The protein belongs to the MurB family. FAD serves as cofactor.

The protein resides in the cytoplasm. The enzyme catalyses UDP-N-acetyl-alpha-D-muramate + NADP(+) = UDP-N-acetyl-3-O-(1-carboxyvinyl)-alpha-D-glucosamine + NADPH + H(+). The protein operates within cell wall biogenesis; peptidoglycan biosynthesis. Cell wall formation. The sequence is that of UDP-N-acetylenolpyruvoylglucosamine reductase from Pseudomonas aeruginosa (strain ATCC 15692 / DSM 22644 / CIP 104116 / JCM 14847 / LMG 12228 / 1C / PRS 101 / PAO1).